Here is a 450-residue protein sequence, read N- to C-terminus: Divalent metal cation transporter MntH (450 aa).

The next 11 membrane-spanning stretches (helical) occupy residues Leu-34–Ile-54, Gly-59–Leu-81, Ile-108–Val-128, Ile-141–Met-161, Ala-170–Ser-190, Gly-212–Leu-232, Ile-263–Phe-283, Pro-305–Ala-325, Ser-361–Ile-381, Gln-383–Leu-403, and Val-422–Val-442.

The protein belongs to the NRAMP family.

Its subcellular location is the cell membrane. In terms of biological role, h(+)-stimulated, divalent metal cation uptake system. This chain is Divalent metal cation transporter MntH, found in Staphylococcus aureus (strain MRSA252).